A 128-amino-acid polypeptide reads, in one-letter code: LIM domain-containing protein 2 (128 aa).

At methionine 1 the chain carries N-acetylmethionine. Positions 1 to 25 are disordered; the sequence is MFQAAGAAQATPSHEAKGSSGNSTV. The LIM zinc-binding domain occupies 39 to 99; sequence ETCAACQKTV…KPHFQQLFKS (61 aa). Cysteine 41, cysteine 44, histidine 62, cysteine 65, cysteine 68, cysteine 71, cysteine 89, and histidine 92 together coordinate Zn(2+).

In terms of assembly, interacts with ILK.

The protein resides in the cytoplasm. It is found in the nucleus. Functionally, acts as an activator of the protein-kinase ILK, thereby regulating cell motility. The sequence is that of LIM domain-containing protein 2 (Limd2) from Rattus norvegicus (Rat).